The sequence spans 726 residues: L-lysine 6-oxidase (726 aa).

The segment at residues 516–581 is a cross-link (4'-cysteinyl-tryptophylquinone (Cys-Trp)); the sequence is CTIQTVNFSE…LPPAYYSYWW (66 aa). The residue at position 581 (W581) is a Tryptophylquinone.

Homotetramer. Cysteine tryptophylquinone residue is required as a cofactor. In terms of processing, the cysteine tryptophylquinone (CTQ) is generated by oxidation of the indole ring of a tryptophan residue to form tryptophylquinone, followed by covalent cross-linking with a cysteine residue.

The protein localises to the secreted. It carries out the reaction L-lysine + O2 + H2O = (S)-2-amino-6-oxohexanoate + H2O2 + NH4(+). Inhibited by aminoguanidine, amiloride and beta-aminopropionitrile. Its function is as follows. Has antibacterial activity against a wide spectrum of Gram-positive and Gram-negative bacteria including nosocomial isolates of S.aureus and Pseudomonas sp. The antimicrobial activity is due to hydrogen peroxide generated by its lysine oxidase activity. Also has autotoxic activity. Involved in biofilm differentiation; responsible for cell death within microcolonies during biofilm development which is linked to the generation of a phenotypically diverse dispersal population and thus may play a role in colonization. This chain is L-lysine 6-oxidase (lodA), found in Marinomonas mediterranea (strain ATCC 700492 / JCM 21426 / NBRC 103028 / MMB-1).